The primary structure comprises 278 residues: S-formylglutathione hydrolase YeiG (278 aa).

Residues Ser145, Asp223, and His256 each act as charge relay system in the active site.

Belongs to the esterase D family.

It carries out the reaction S-formylglutathione + H2O = formate + glutathione + H(+). Functionally, serine hydrolase involved in the detoxification of formaldehyde. Hydrolyzes S-formylglutathione to glutathione and formate. The protein is S-formylglutathione hydrolase YeiG (yeiG) of Escherichia coli O139:H28 (strain E24377A / ETEC).